The chain runs to 159 residues: Probable histone H2A.5 (159 aa).

Over residues 1 to 10 (MDAAGAGAGG) the composition is skewed to gly residues. Disordered stretches follow at residues 1-29 (MDAA…KKAV) and 136-159 (EKAA…PKKA). Composition is skewed to basic residues over residues 11–29 (KLKK…KKAV) and 148–159 (PKKAAGKSPKKA). 2 short sequence motifs (SPKK motif) span residues 147-150 (SPKK) and 155-158 (SPKK).

It belongs to the histone H2A family. The nucleosome is a histone octamer containing two molecules each of H2A, H2B, H3 and H4 assembled in one H3-H4 heterotetramer and two H2A-H2B heterodimers. The octamer wraps approximately 147 bp of DNA.

Its subcellular location is the nucleus. The protein resides in the chromosome. In terms of biological role, core component of nucleosome. Nucleosomes wrap and compact DNA into chromatin, limiting DNA accessibility to the cellular machineries which require DNA as a template. Histones thereby play a central role in transcription regulation, DNA repair, DNA replication and chromosomal stability. DNA accessibility is regulated via a complex set of post-translational modifications of histones, also called histone code, and nucleosome remodeling. The chain is Probable histone H2A.5 from Oryza sativa subsp. indica (Rice).